The primary structure comprises 107 residues: ATP synthase subunit c (107 aa).

3 helical membrane-spanning segments follow: residues 4–24 (IVFLMLALSGFAFAAEGSMNQ), 29–49 (FSILAAGLGLGVAALGGAIGM), and 74–94 (MFIALAMIEAQVIYALVIALI).

This sequence belongs to the ATPase C chain family. In terms of assembly, F-type ATPases have 2 components, F(1) - the catalytic core - and F(0) - the membrane proton channel. F(1) has five subunits: alpha(3), beta(3), gamma(1), delta(1), epsilon(1). F(0) has three main subunits: a(1), b(2) and c(10-14). The alpha and beta chains form an alternating ring which encloses part of the gamma chain. F(1) is attached to F(0) by a central stalk formed by the gamma and epsilon chains, while a peripheral stalk is formed by the delta and b chains.

The protein resides in the cell inner membrane. Its function is as follows. F(1)F(0) ATP synthase produces ATP from ADP in the presence of a proton or sodium gradient. F-type ATPases consist of two structural domains, F(1) containing the extramembraneous catalytic core and F(0) containing the membrane proton channel, linked together by a central stalk and a peripheral stalk. During catalysis, ATP synthesis in the catalytic domain of F(1) is coupled via a rotary mechanism of the central stalk subunits to proton translocation. Functionally, key component of the F(0) channel; it plays a direct role in translocation across the membrane. A homomeric c-ring of between 10-14 subunits forms the central stalk rotor element with the F(1) delta and epsilon subunits. In Campylobacter lari (strain RM2100 / D67 / ATCC BAA-1060), this protein is ATP synthase subunit c.